Here is a 185-residue protein sequence, read N- to C-terminus: Ribosome-recycling factor (185 aa).

It belongs to the RRF family.

Its subcellular location is the cytoplasm. Functionally, responsible for the release of ribosomes from messenger RNA at the termination of protein biosynthesis. May increase the efficiency of translation by recycling ribosomes from one round of translation to another. In Clavibacter sepedonicus (Clavibacter michiganensis subsp. sepedonicus), this protein is Ribosome-recycling factor.